We begin with the raw amino-acid sequence, 185 residues long: Ribosome-recycling factor (185 aa).

It belongs to the RRF family.

The protein localises to the cytoplasm. In terms of biological role, responsible for the release of ribosomes from messenger RNA at the termination of protein biosynthesis. May increase the efficiency of translation by recycling ribosomes from one round of translation to another. This is Ribosome-recycling factor from Geobacter metallireducens (strain ATCC 53774 / DSM 7210 / GS-15).